The primary structure comprises 348 residues: Delta(6)-protoilludene synthase 18 (348 aa).

Residues D87, N223, S227, and E231 each contribute to the Mg(2+) site. A DDXXD motif motif is present at residues 87–91 (DEYTD). The NSE/DTE motif signature appears at 223–231 (NDLVSYNRE). Positions 311 and 312 each coordinate (2E,6E)-farnesyl diphosphate.

This sequence belongs to the terpene synthase family. Mg(2+) is required as a cofactor.

The enzyme catalyses (2E,6E)-farnesyl diphosphate = Delta(6)-protoilludene + diphosphate. Functionally, terpene cyclase that catalyzes the cyclization of farnesyl diphosphate (FPP) to delta(6)-protoilludene. The chain is Delta(6)-protoilludene synthase 18 from Postia placenta (strain ATCC 44394 / Madison 698-R) (Brown rot fungus).